A 202-amino-acid polypeptide reads, in one-letter code: Probable cytochrome c oxidase subunit 3 (202 aa).

The next 5 membrane-spanning stretches (helical) occupy residues 30–50, 69–89, 101–121, 141–161, and 178–198; these read VVWLSSELMFFAGLFAMYFTA, AVPVTLVLIASSFTCQMGVFS, WYVITLLMGLFFVLGQGYEYY, LATGFHGLHVTGGLIAFIFLL, and IVVSYYWHFVDIVWIALFTVI.

It belongs to the cytochrome c oxidase subunit 3 family.

The protein localises to the cell membrane. The catalysed reaction is 4 Fe(II)-[cytochrome c] + O2 + 8 H(+)(in) = 4 Fe(III)-[cytochrome c] + 2 H2O + 4 H(+)(out). In Mycobacterium leprae (strain TN), this protein is Probable cytochrome c oxidase subunit 3 (ctaE).